The sequence spans 65 residues: UPF0434 protein PSHAa1659 (65 aa).

It belongs to the UPF0434 family.

The chain is UPF0434 protein PSHAa1659 from Pseudoalteromonas translucida (strain TAC 125).